Consider the following 129-residue polypeptide: Probable tautomerase YrdN (129 aa).

Residue Pro2 is the Proton acceptor; via imino nitrogen of the active site.

The protein belongs to the 4-oxalocrotonate tautomerase family.

Functionally, putative target of GltR. The chain is Probable tautomerase YrdN (yrdN) from Bacillus subtilis (strain 168).